A 420-amino-acid polypeptide reads, in one-letter code: L-cysteine:1D-myo-inositol 2-amino-2-deoxy-alpha-D-glucopyranoside ligase (420 aa).

Cysteine 43 is a binding site for Zn(2+). L-cysteinyl-5'-AMP contacts are provided by residues 43-46, threonine 58, and 81-83; these read CGIT and NIT. Residues 45-55 carry the 'HIGH' region motif; the sequence is ITPYDATHLGH. The 'ERGGDP' region motif lies at 187 to 192; it reads ERGGDP. Tryptophan 227 is a binding site for L-cysteinyl-5'-AMP. Cysteine 231 is a Zn(2+) binding site. 249 to 251 is a binding site for L-cysteinyl-5'-AMP; that stretch reads GSD. Histidine 256 contributes to the Zn(2+) binding site. Isoleucine 289 is an L-cysteinyl-5'-AMP binding site. The 'KMSKS' region signature appears at 295 to 299; that stretch reads KMSKS.

This sequence belongs to the class-I aminoacyl-tRNA synthetase family. MshC subfamily. Monomer. The cofactor is Zn(2+).

The enzyme catalyses 1D-myo-inositol 2-amino-2-deoxy-alpha-D-glucopyranoside + L-cysteine + ATP = 1D-myo-inositol 2-(L-cysteinylamino)-2-deoxy-alpha-D-glucopyranoside + AMP + diphosphate + H(+). Its function is as follows. Catalyzes the ATP-dependent condensation of GlcN-Ins and L-cysteine to form L-Cys-GlcN-Ins. The sequence is that of L-cysteine:1D-myo-inositol 2-amino-2-deoxy-alpha-D-glucopyranoside ligase from Segniliparus rotundus (strain ATCC BAA-972 / CDC 1076 / CIP 108378 / DSM 44985 / JCM 13578).